A 311-amino-acid chain; its full sequence is 2-phospho-L-lactate transferase (311 aa).

The 7,8-didemethyl-8-hydroxy-5-deazariboflavin site is built by aspartate 52 and arginine 91.

This sequence belongs to the CofD family. As to quaternary structure, homodimer. Mg(2+) serves as cofactor.

The enzyme catalyses (2S)-lactyl-2-diphospho-5'-guanosine + 7,8-didemethyl-8-hydroxy-5-deazariboflavin = oxidized coenzyme F420-0 + GMP + H(+). It functions in the pathway cofactor biosynthesis; coenzyme F420 biosynthesis. Its activity is regulated as follows. Inhibited by EDTA in vitro. Catalyzes the transfer of the 2-phospholactate moiety from (2S)-lactyl-2-diphospho-5'-guanosine to 7,8-didemethyl-8-hydroxy-5-deazariboflavin (FO) with the formation of oxidized coenzyme F420-0 and GMP. The protein is 2-phospho-L-lactate transferase of Methanocaldococcus jannaschii (strain ATCC 43067 / DSM 2661 / JAL-1 / JCM 10045 / NBRC 100440) (Methanococcus jannaschii).